The sequence spans 367 residues: Glutamate 5-kinase (367 aa).

Residue Lys-10 coordinates ATP. Positions 50, 137, and 149 each coordinate substrate. Residues 169–170 and 211–217 contribute to the ATP site; these read TD and TGGMGTK. The 79-residue stretch at 275–353 folds into the PUA domain; it reads AGEITVDDGA…QEISEILGYE (79 aa).

This sequence belongs to the glutamate 5-kinase family.

The protein resides in the cytoplasm. The catalysed reaction is L-glutamate + ATP = L-glutamyl 5-phosphate + ADP. Its pathway is amino-acid biosynthesis; L-proline biosynthesis; L-glutamate 5-semialdehyde from L-glutamate: step 1/2. Proline-mediated feedback inhibition. In terms of biological role, catalyzes the transfer of a phosphate group to glutamate to form L-glutamate 5-phosphate. The sequence is that of Glutamate 5-kinase from Serratia marcescens.